The chain runs to 319 residues: High mobility group B protein 10 (319 aa).

Positions Met1–His13 are enriched in polar residues. A disordered region spans residues Met1–Lys25. Positions Val40 to Tyr131 constitute an ARID domain. Residues Pro203 to Ser220 are compositionally biased toward polar residues. The tract at residues Pro203–Leu230 is disordered. A DNA-binding region (HMG box) is located at residues Pro238–Lys305.

In terms of tissue distribution, ubiquitously expressed.

The protein localises to the nucleus. Its function is as follows. Binds preferentially DNA with A/T-rich content. This chain is High mobility group B protein 10 (HMGB10), found in Arabidopsis thaliana (Mouse-ear cress).